The following is a 262-amino-acid chain: Putative hydroxypyruvate isomerase (262 aa).

Residues glutamate 146 and glutamate 244 each act as proton donor/acceptor in the active site.

The protein belongs to the hyi family.

The enzyme catalyses 3-hydroxypyruvate = 2-hydroxy-3-oxopropanoate. Functionally, catalyzes the reversible isomerization between hydroxypyruvate and 2-hydroxy-3-oxopropanoate (also termed tartronate semialdehyde). This Caenorhabditis elegans protein is Putative hydroxypyruvate isomerase.